We begin with the raw amino-acid sequence, 78 residues long: Excisionase (78 aa).

Functionally, excisionase and integrase are necessary for the excision of prophage from the host genome by site-specific recombination at the att site. In Enterobacteria phage P21 (Bacteriophage 21), this protein is Excisionase (xis).